A 407-amino-acid polypeptide reads, in one-letter code: BRCA1-A complex subunit Abraxas 1 (407 aa).

Positions 7–155 constitute an MPN domain; it reads LGVLSGFVLG…THCLEHALYK (149 aa). S48 bears the Phosphoserine mark. Positions 209-259 form a coiled coil; the sequence is LKEVHKINEMYAAVQEELKSICQKVEQSEREVEKLLMDVNQLKEVRRTQQA. The disordered stretch occupies residues 344–407; it reads KRKALDTHDQ…DADYPRSPTF (64 aa). Basic and acidic residues predominate over residues 347 to 366; it reads ALDTHDQGSVKRPRLLETES. A phosphoserine mark is found at S384, S385, S394, and S404. A compositionally biased stretch (acidic residues) spans 388–399; it reads IDIEMGSPEDDA. The pSXXF motif motif lies at 404–407; sequence SPTF.

Belongs to the FAM175 family. Abraxas subfamily. In terms of assembly, component of the ARISC complex, at least composed of UIMC1/RAP80, ABRAXAS1, BRCC3/BRCC36, BABAM2 and BABAM1/NBA1. Component of the BRCA1-A complex, at least composed of the BRCA1, BARD1, UIMC1/RAP80, ABRAXAS1, BRCC3/BRCC36, BABAM2 and BABAM1/NBA1. In the complex, interacts directly with UIMC1/RAP80, BRCC3/BRCC36 and BABAM2. Homodimer. Interacts directly (when phosphorylated at Ser-404) with BRCA1. The phosphorylated homodimer can interact directly with two BRCA1 chains, giving rise to a heterotetramer. Binds polyubiquitin. Post-translationally, phosphorylation of Ser-404 of the pSXXF motif by ATM or ATR constitutes a specific recognition motif for the BRCT domain of BRCA1.

Its subcellular location is the nucleus. Involved in DNA damage response and double-strand break (DSB) repair. Component of the BRCA1-A complex, acting as a central scaffold protein that assembles the various components of the complex and mediates the recruitment of BRCA1. The BRCA1-A complex specifically recognizes 'Lys-63'-linked ubiquitinated histones H2A and H2AX at DNA lesion sites, leading to target the BRCA1-BARD1 heterodimer to sites of DNA damage at DSBs. This complex also possesses deubiquitinase activity that specifically removes 'Lys-63'-linked ubiquitin on histones H2A and H2AX. The sequence is that of BRCA1-A complex subunit Abraxas 1 from Mus musculus (Mouse).